The following is a 91-amino-acid chain: DNA-directed RNA polymerase subunit omega (91 aa).

The protein belongs to the RNA polymerase subunit omega family. As to quaternary structure, the RNAP catalytic core consists of 2 alpha, 1 beta, 1 beta' and 1 omega subunit. When a sigma factor is associated with the core the holoenzyme is formed, which can initiate transcription.

The catalysed reaction is RNA(n) + a ribonucleoside 5'-triphosphate = RNA(n+1) + diphosphate. In terms of biological role, promotes RNA polymerase assembly. Latches the N- and C-terminal regions of the beta' subunit thereby facilitating its interaction with the beta and alpha subunits. This Pectobacterium atrosepticum (strain SCRI 1043 / ATCC BAA-672) (Erwinia carotovora subsp. atroseptica) protein is DNA-directed RNA polymerase subunit omega.